The following is a 326-amino-acid chain: Fructose-1,6-bisphosphatase class 1 (326 aa).

Mg(2+) is bound by residues glutamate 90, aspartate 111, leucine 113, and aspartate 114. Substrate-binding positions include 114–117 (DGSS), tyrosine 222, and lysine 253. Glutamate 259 provides a ligand contact to Mg(2+).

It belongs to the FBPase class 1 family. In terms of assembly, homotetramer. The cofactor is Mg(2+).

It is found in the cytoplasm. The catalysed reaction is beta-D-fructose 1,6-bisphosphate + H2O = beta-D-fructose 6-phosphate + phosphate. Its pathway is carbohydrate biosynthesis; gluconeogenesis. This chain is Fructose-1,6-bisphosphatase class 1, found in Citrifermentans bemidjiense (strain ATCC BAA-1014 / DSM 16622 / JCM 12645 / Bem) (Geobacter bemidjiensis).